Consider the following 303-residue polypeptide: 2-(5''-triphosphoribosyl)-3'-dephosphocoenzyme-A synthase (303 aa).

Belongs to the CitG/MdcB family.

It catalyses the reaction 3'-dephospho-CoA + ATP = 2'-(5''-triphospho-alpha-D-ribosyl)-3'-dephospho-CoA + adenine. Functionally, catalyzes the formation of 2-(5''-triphosphoribosyl)-3'-dephosphocoenzyme-A, the precursor of the prosthetic group of the holo-acyl carrier protein (gamma chain) of citrate lyase, from ATP and dephospho-CoA. This Escherichia fergusonii (strain ATCC 35469 / DSM 13698 / CCUG 18766 / IAM 14443 / JCM 21226 / LMG 7866 / NBRC 102419 / NCTC 12128 / CDC 0568-73) protein is 2-(5''-triphosphoribosyl)-3'-dephosphocoenzyme-A synthase.